A 368-amino-acid chain; its full sequence is MTLQQKELFQKSPLLLENGETLSPVLVGYETYGTLSASRDNCILLEHALTGTAHAAKHFEDDAPGWWDDYIGPGKTIDTDKYFLVCTNVFGGCSGTTGPSSINPKTGEPFRLQFPGFSIKDIIKVQRELLEQLGVTRIVSVIGGSMGGMQATEWAIDYADITDSIINIASPLAAGPDAIGYNLIMRMAILNDPDFNGGNYVGQPEGGLATARMVGMMTYRTSELFSKRFERFTVAESSPAAFSKEHFQIESYLQYQGDTFVERFDANSYLYLTKAIDLFDVTAPAKDDLPAFSKIKIPYLLIGITTDQLFRIHDLRRGYELLKEWDVPVTYHEVASEYGHDAFLVEKEVPKFEPLIRSFLSNLPVKSI.

The region spanning 43–346 (ILLEHALTGT…EYGHDAFLVE (304 aa)) is the AB hydrolase-1 domain. Serine 145 (nucleophile) is an active-site residue. Arginine 212 lines the substrate pocket. Active-site residues include aspartate 307 and histidine 340. Residue aspartate 341 participates in substrate binding.

The protein belongs to the AB hydrolase superfamily. MetX family. As to quaternary structure, homodimer.

The protein localises to the cytoplasm. The enzyme catalyses L-homoserine + acetyl-CoA = O-acetyl-L-homoserine + CoA. It functions in the pathway amino-acid biosynthesis; L-methionine biosynthesis via de novo pathway; O-acetyl-L-homoserine from L-homoserine: step 1/1. In terms of biological role, transfers an acetyl group from acetyl-CoA to L-homoserine, forming acetyl-L-homoserine. The protein is Homoserine O-acetyltransferase of Listeria monocytogenes serovar 1/2a (strain ATCC BAA-679 / EGD-e).